We begin with the raw amino-acid sequence, 77 residues long: MASSSMSTSSWTAREDKQFEMALAKFDKDTPDRWQKIARAVGGKSTEEVKRHYELLLRDVNDIESGRYPQPRYRNTN.

The region spanning 6 to 61 (MSTSSWTAREDKQFEMALAKFDKDTPDRWQKIARAVGGKSTEEVKRHYELLLRDVN) is the SANT domain.

In terms of tissue distribution, expressed just outside the vascular bundles in the rosette stem and the leaf traces. Not detected in floral primordia.

The protein localises to the nucleus. Functionally, probable transcription factor. This chain is Protein RADIALIS-like 4 (RL4), found in Arabidopsis thaliana (Mouse-ear cress).